The following is a 47-amino-acid chain: Large ribosomal subunit protein bL34 (47 aa).

It belongs to the bacterial ribosomal protein bL34 family.

In Mycobacterium avium (strain 104), this protein is Large ribosomal subunit protein bL34.